A 112-amino-acid polypeptide reads, in one-letter code: Protein FAM32A (112 aa).

A disordered region spans residues Thr-23 to Asp-56. Basic and acidic residues predominate over residues Lys-45–Asp-56.

It belongs to the FAM32 family. As to expression, widely expressed, with highest level in pancreas and lowest in muscle.

Its subcellular location is the nucleus. Its function is as follows. May induce G2 arrest and apoptosis. May also increase cell sensitivity to apoptotic stimuli. In cell lines, may play a role in the inhibition of anchor-independent cell growth. This chain is Protein FAM32A (Fam32a), found in Mus musculus (Mouse).